The primary structure comprises 315 residues: Putative HTH-type transcriptional regulatory protein PF1851 (315 aa).

Residues L131–F189 form the HTH cro/C1-type domain. A DNA-binding region (H-T-H motif) is located at residues T142–K161.

The chain is Putative HTH-type transcriptional regulatory protein PF1851 from Pyrococcus furiosus (strain ATCC 43587 / DSM 3638 / JCM 8422 / Vc1).